The sequence spans 355 residues: Cyclin-D1-binding protein 1 (355 aa).

N-acetylalanine is present on alanine 2. 2 interaction with TCF3 regions span residues 2–181 and 147–355; these read ASST…VDLV and ISCN…AVEL. The tract at residues 2–187 is interaction with RPLP0; the sequence is ASSTTPVSFL…VDLVKDAHEE (186 aa). The interval 2–205 is required for interaction with CCND1; that stretch reads ASSTTPVSFL…DPYCGLLDDS (204 aa). A disordered region spans residues 203–224; the sequence is DDSEDNSDSHHNEDGVGLPSNR. Residues 235-355 are interaction with RPLP0; sequence LITPCLALVR…KELTQRAVEL (121 aa).

Belongs to the CCNDBP1 family. Interacts with CCND1 and GRAP2. May also interact with COPS5, RPLP0, SIRT6, SYF2 and TCF3. Post-translationally, phosphorylated.

It is found in the cytoplasm. It localises to the nucleus. In terms of biological role, may negatively regulate cell cycle progression. May act at least in part via inhibition of the cyclin-D1/CDK4 complex, thereby preventing phosphorylation of RB1 and blocking E2F-dependent transcription. In Rattus norvegicus (Rat), this protein is Cyclin-D1-binding protein 1 (Ccndbp1).